Consider the following 268-residue polypeptide: Peptide transport system ATP-binding protein SapF (268 aa).

The 246-residue stretch at 6-251 folds into the ABC transporter domain; it reads LEVRNLSKTF…PLHELTRRLI (246 aa). Residue 47–54 coordinates ATP; the sequence is GENGSGKS.

Belongs to the ABC transporter superfamily.

Its subcellular location is the cell inner membrane. Functionally, involved in a peptide intake transport system that plays a role in the resistance to antimicrobial peptides. The sequence is that of Peptide transport system ATP-binding protein SapF from Salmonella typhimurium (strain LT2 / SGSC1412 / ATCC 700720).